An 807-amino-acid chain; its full sequence is Protein WEAK CHLOROPLAST MOVEMENT UNDER BLUE LIGHT 1 (807 aa).

Residues 1–162 (MEDLKTVEAS…GTPKNVDSHR (162 aa)) form a disordered region. A compositionally biased stretch (polar residues) spans 31 to 40 (RESNIQSATK). A compositionally biased stretch (low complexity) spans 46–73 (QSQTDTEETQQSQTDTEETQQSQTDDTT). Polar residues predominate over residues 138–157 (RTVSSPRFSGSPVSTGTPKN). Position 148 is a phosphoserine (Ser148). Coiled coils occupy residues 191–429 (RMQA…ELVA), 457–489 (DLHAAVASAKKELEEVNVNIEKAAAEVSCLKLA), 516–621 (IAVA…ALEE), and 664–724 (AAVS…WRAE). 2 disordered regions span residues 532–565 (IASVQSKEKDAREKMVELPKQLQQAAEEADEAKS) and 722–789 (RAEH…KKKK). Basic and acidic residues-rich tracts occupy residues 537–548 (SKEKDAREKMVE), 722–732 (RAEHEQKRKAG), and 739–749 (KNLKESFEGGK). Polar residues predominate over residues 761–781 (SSPSESYGTEENSETNLSPQT).

This sequence belongs to the WEB family. In terms of assembly, interacts with PMI2. Ubiquitous but preferentially in chloroplast-containing tissues.

Its subcellular location is the cytoplasm. Its function is as follows. Required for the chloroplast avoidance response under high intensity blue light. This avoidance response consists in the relocation of chloroplasts on the anticlinal side of exposed cells. Acts in association with PMI2 to maintain the velocity of chloroplast photorelocation movement via cp-actin filaments regulation. The polypeptide is Protein WEAK CHLOROPLAST MOVEMENT UNDER BLUE LIGHT 1 (WEB1) (Arabidopsis thaliana (Mouse-ear cress)).